Reading from the N-terminus, the 529-residue chain is Glutamyl-tRNA reductase (529 aa).

47-50 is a binding site for substrate; that stretch reads TCNR. Residue Cys48 is the Nucleophile of the active site. The segment at 56–80 is disordered; that stretch reads SPRQQAPAPPRPGSAPPPSDEELSR. The span at 62 to 73 shows a compositional bias: pro residues; the sequence is PAPPRPGSAPPP. Substrate is bound by residues Ser125, 130–132, and Gln136; that span reads EPQ. 205–210 provides a ligand contact to NADP(+); it reads GAGDMA. The interval 454–505 is disordered; sequence RGAVDGPPTPRSARGAAPPASGARGGGSPRHADPRPQAAEDNGVYARQPGGR. Low complexity predominate over residues 464–475; the sequence is RSARGAAPPASG.

The protein belongs to the glutamyl-tRNA reductase family. Homodimer.

The enzyme catalyses (S)-4-amino-5-oxopentanoate + tRNA(Glu) + NADP(+) = L-glutamyl-tRNA(Glu) + NADPH + H(+). Its pathway is porphyrin-containing compound metabolism; protoporphyrin-IX biosynthesis; 5-aminolevulinate from L-glutamyl-tRNA(Glu): step 1/2. Its function is as follows. Catalyzes the NADPH-dependent reduction of glutamyl-tRNA(Glu) to glutamate 1-semialdehyde (GSA). The chain is Glutamyl-tRNA reductase from Sorangium cellulosum (strain So ce56) (Polyangium cellulosum (strain So ce56)).